The chain runs to 411 residues: Arginine deiminase (411 aa).

Cys-401 acts as the Amidino-cysteine intermediate in catalysis.

This sequence belongs to the arginine deiminase family.

The protein localises to the cytoplasm. It catalyses the reaction L-arginine + H2O = L-citrulline + NH4(+). It participates in amino-acid degradation; L-arginine degradation via ADI pathway; carbamoyl phosphate from L-arginine: step 1/2. This is Arginine deiminase from Staphylococcus aureus (strain JH9).